The following is a 121-amino-acid chain: Putative RNase MJ0127 (121 aa).

Catalysis depends on residues R76 and H81. The RX(4)HXY motif signature appears at 76-83 (RDKLIHHY). Residue Y83 is modified to O-di-AMP-tyrosine.

This sequence belongs to the HepT RNase toxin family. As to quaternary structure, homodimer, probably forms a complex with cognate antitoxin MJ0128. In terms of processing, modified by cognate antitoxin MJ0128; probably at least 2 successive AMPylation events occur on Tyr-83.

Probable toxic component of a putative type VII toxin-antitoxin (TA) system, probably an RNase. Probably neutralized by cognate antitoxin MJ0128. Neutralization may be due to AMPylation by MJ0128. The chain is Putative RNase MJ0127 from Methanocaldococcus jannaschii (strain ATCC 43067 / DSM 2661 / JAL-1 / JCM 10045 / NBRC 100440) (Methanococcus jannaschii).